A 492-amino-acid chain; its full sequence is Falcipain-3 (492 aa).

Residues 1-35 (MEYHMEYSPNEVIKQEREVFVGKEKSGSKFKRKRS) are Cytoplasmic-facing. A propeptide spans 1–242 (MEYHMEYSPN…LNLKTHGPFK (242 aa)) (activation peptide). Residues 16 to 25 (EREVFVGKEK) carry the Bipartite vacuolar targeting signal 1 motif. A helical; Signal-anchor for type II membrane protein transmembrane segment spans residues 36–56 (IFIVLTVSICFMFALMLFYFT). Residues 57 to 492 (RNENNKTLFT…GTEAYVPLLE (436 aa)) are Lumenal-facing. A glycan (N-linked (GlcNAc...) asparagine) is linked at Asn-61. The short motif at 84–105 (KSESGKKFIVSKLEELISSYDK) is the Bipartite vacuolar targeting signal 2 element. Asn-129 carries an N-linked (GlcNAc...) asparagine glycan. Positions 251–268 (EANYEDVIKKYKPADAKL) match the Nose motif; required for the correct folding of the mature form motif. Cystine bridges form between Cys-290–Cys-331, Cys-324–Cys-365, Cys-350–Cys-370, and Cys-419–Cys-480. The active site involves Cys-293. Residue His-425 is part of the active site. An Arm motif; binds to host hemoglobin and required for the inhibitory interaction between the propeptide and the catalytic domain motif is present at residues 436 to 445 (DIYNEDTGRM). Residue Asn-455 is part of the active site.

The protein belongs to the peptidase C1 family. Auto-cleavage occurs at acidic pH. The proenzyme is the predominant form in late trophozoites and both the pro and mature enzyme are present in schizonts.

Its subcellular location is the membrane. The protein localises to the vacuole. It is found in the cytoplasmic vesicle membrane. With respect to regulation, inhibited by cysteine protease inhibitor ICP. In terms of biological role, cysteine protease which cleaves native host hemoglobin and globin in the food vacuole during the asexual blood stage. Preferentially cleaves substrates which have an arginine at the P1 position and a leucine at the P2 position. The protein is Falcipain-3 of Plasmodium falciparum (isolate 3D7).